The primary structure comprises 455 residues: Exodeoxyribonuclease 7 large subunit (455 aa).

The protein belongs to the XseA family. In terms of assembly, heterooligomer composed of large and small subunits.

The protein resides in the cytoplasm. It catalyses the reaction Exonucleolytic cleavage in either 5'- to 3'- or 3'- to 5'-direction to yield nucleoside 5'-phosphates.. Its function is as follows. Bidirectionally degrades single-stranded DNA into large acid-insoluble oligonucleotides, which are then degraded further into small acid-soluble oligonucleotides. This Lactobacillus acidophilus (strain ATCC 700396 / NCK56 / N2 / NCFM) protein is Exodeoxyribonuclease 7 large subunit.